A 200-amino-acid chain; its full sequence is Casparian strip membrane protein 1 (200 aa).

Residues 1–38 lie on the Cytoplasmic side of the membrane; the sequence is MSTTIEIPAESSAVAKGKAPLIGASSSSYEKKGGYKKG. The chain crosses the membrane as a helical span at residues 39–59; that stretch reads IAIFDFILRLGAVISALSAAA. The Extracellular portion of the chain corresponds to 60-88; that stretch reads TMGTSDETLPFFTQFFQFEAGYDDFPTFQ. Residues 89–109 traverse the membrane as a helical segment; the sequence is FFVIAMGFVGGYLVLSLPFSV. The Cytoplasmic portion of the chain corresponds to 110 to 121; sequence VAIIRPHAVGIR. A helical membrane pass occupies residues 122–142; that stretch reads LLLLILDTVALTLNTAAAAAA. The Extracellular portion of the chain corresponds to 143-175; it reads AAIVYLAHNGNQSANWLAVCQQFGDFCQKVSGG. The N-linked (GlcNAc...) asparagine glycan is linked to asparagine 153. Residues 176–196 traverse the membrane as a helical segment; the sequence is VVASFVSVLVFLLLVVMSAVA. Over 197–200 the chain is Cytoplasmic; that stretch reads LRKH.

The protein belongs to the Casparian strip membrane proteins (CASP) family. Homodimer and heterodimers.

It localises to the cell membrane. Functionally, regulates membrane-cell wall junctions and localized cell wall deposition. Required for establishment of the Casparian strip membrane domain (CSD) and the subsequent formation of Casparian strips, a cell wall modification of the root endodermis that determines an apoplastic barrier between the intraorganismal apoplasm and the extraorganismal apoplasm and prevents lateral diffusion. The sequence is that of Casparian strip membrane protein 1 from Ricinus communis (Castor bean).